The sequence spans 90 residues: UPF0223 protein lmo1058 (90 aa).

Belongs to the UPF0223 family.

This is UPF0223 protein lmo1058 from Listeria monocytogenes serovar 1/2a (strain ATCC BAA-679 / EGD-e).